A 358-amino-acid polypeptide reads, in one-letter code: Myb family transcription factor IPN2 (358 aa).

Positions 1–20 (MERMFPPKKPSTMNSHDRPM) are disordered. An HTH myb-type domain is found at 32–92 (TDPKPRLRWT…HLQKFRLGKQ (61 aa)). The H-T-H motif DNA-binding region spans 63–88 (PKTIMRVMGVKGLTLYHLKSHLQKFR). Residues 127 to 171 (NMNEMQIEVQRRLHEQLEVQKHLQLRIEAQGKYMQSILEKAYQTL) are a coiled coil. Residues 139-144 (LHEQLE) carry the LHEQLE motif. A disordered region spans residues 310 to 358 (IYDSKPEEKKFDASMKLERPSPRRAPLGERMSPMITTGTMAQGRSSPFG). A compositionally biased stretch (basic and acidic residues) spans 311 to 330 (YDSKPEEKKFDASMKLERPS). A compositionally biased stretch (polar residues) spans 343-358 (MITTGTMAQGRSSPFG).

Belongs to the MYB-CC family. As to quaternary structure, interacts with NSP2. In terms of tissue distribution, expressed in leaves, stems, nodules and roots.

The protein resides in the nucleus. Transcriptional regulator required for Nod-factor-induced gene expression. Transcription activator involved in the induction of NIN and ENOD40 genes, which are required for rhizobial infection and early nodule development. Possesses strong transactivation activity in vitro. Does not seem to contribute to the early steps of the arbuscular mycorrhizal fungus infection and colonization processes in roots. In Lotus japonicus (Lotus corniculatus var. japonicus), this protein is Myb family transcription factor IPN2.